The chain runs to 483 residues: Probable glycine dehydrogenase (decarboxylating) subunit 2 (483 aa).

The segment at 1-33 (MLIFEHSRKNRRNYSQAPATRPAKNNIPDHLKR) is disordered. At Lys-264 the chain carries N6-(pyridoxal phosphate)lysine.

Belongs to the GcvP family. C-terminal subunit subfamily. In terms of assembly, the glycine cleavage system is composed of four proteins: P, T, L and H. In this organism, the P 'protein' is a heterodimer of two subunits. The cofactor is pyridoxal 5'-phosphate.

The enzyme catalyses N(6)-[(R)-lipoyl]-L-lysyl-[glycine-cleavage complex H protein] + glycine + H(+) = N(6)-[(R)-S(8)-aminomethyldihydrolipoyl]-L-lysyl-[glycine-cleavage complex H protein] + CO2. Its function is as follows. The glycine cleavage system catalyzes the degradation of glycine. The P protein binds the alpha-amino group of glycine through its pyridoxal phosphate cofactor; CO(2) is released and the remaining methylamine moiety is then transferred to the lipoamide cofactor of the H protein. This is Probable glycine dehydrogenase (decarboxylating) subunit 2 from Nitrosomonas europaea (strain ATCC 19718 / CIP 103999 / KCTC 2705 / NBRC 14298).